The sequence spans 37 residues: MEPNPNRQPVELNRTSLYLGLLLILVLALLFSSYFFN.

Residues 1-13 lie on the Cytoplasmic side of the membrane; that stretch reads MEPNPNRQPVELN. A helical transmembrane segment spans residues 14-35; it reads RTSLYLGLLLILVLALLFSSYF. The Lumenal portion of the chain corresponds to 36 to 37; sequence FN.

PSII is composed of 1 copy each of membrane proteins PsbA, PsbB, PsbC, PsbD, PsbE, PsbF, PsbH, PsbI, PsbJ, PsbK, PsbL, PsbM, PsbT, PsbX, PsbY, PsbZ, Psb30/Ycf12, peripheral proteins PsbO, CyanoQ (PsbQ), PsbU, PsbV and a large number of cofactors. It forms dimeric complexes. Part of a photosystem II (PSII) assembly intermediate complex PSII-I; crystallized from a strain deleted of psbJ, it forms monomeric PSII before addition of the oxygen evolving complex. PSII-I includes 3 assembly factors not found in mature PSII (Psb27, Psb28 and Psb34). The cofactor is PSII binds multiple chlorophylls, carotenoids and specific lipids..

The protein localises to the cellular thylakoid membrane. Functionally, one of the components of the core complex of photosystem II (PSII). PSII is a light-driven water:plastoquinone oxidoreductase that uses light energy to abstract electrons from H(2)O, generating O(2) and a proton gradient subsequently used for ATP formation. It consists of a core antenna complex that captures photons, and an electron transfer chain that converts photonic excitation into a charge separation. This subunit is found at the monomer-monomer interface and is required for correct PSII assembly and/or dimerization. This subunit may make specific contacts with lipid(s). This is Photosystem II reaction center protein L from Thermosynechococcus vestitus (strain NIES-2133 / IAM M-273 / BP-1).